The following is a 401-amino-acid chain: Acetate kinase (401 aa).

Asparagine 7 contributes to the Mg(2+) binding site. Residue lysine 14 coordinates ATP. Arginine 96 is a substrate binding site. Aspartate 153 serves as the catalytic Proton donor/acceptor. ATP contacts are provided by residues histidine 212–glycine 216, aspartate 287–arginine 289, and glycine 335–asparagine 339. Glutamate 388 serves as a coordination point for Mg(2+).

Belongs to the acetokinase family. As to quaternary structure, homodimer. The cofactor is Mg(2+). Requires Mn(2+) as cofactor.

The protein localises to the cytoplasm. It catalyses the reaction acetate + ATP = acetyl phosphate + ADP. It functions in the pathway metabolic intermediate biosynthesis; acetyl-CoA biosynthesis; acetyl-CoA from acetate: step 1/2. In terms of biological role, catalyzes the formation of acetyl phosphate from acetate and ATP. Can also catalyze the reverse reaction. This Microcystis aeruginosa (strain NIES-843 / IAM M-2473) protein is Acetate kinase.